The primary structure comprises 332 residues: RNA polymerase sigma-B factor (332 aa).

Residues 125-138 carry the Polymerase core binding motif; that stretch reads DLIQEGALGLERGV. Residues 294 to 313 constitute a DNA-binding region (H-T-H motif); that stretch reads LVQISQRMGISRERVRQVEK.

This sequence belongs to the sigma-70 factor family.

Sigma factors are initiation factors that promote the attachment of RNA polymerase to specific initiation sites and are then released. This Nostoc sp. (strain PCC 7120 / SAG 25.82 / UTEX 2576) protein is RNA polymerase sigma-B factor (sigB).